A 590-amino-acid polypeptide reads, in one-letter code: DNA mismatch repair protein MutL (590 aa).

It belongs to the DNA mismatch repair MutL/HexB family.

Its function is as follows. This protein is involved in the repair of mismatches in DNA. It is required for dam-dependent methyl-directed DNA mismatch repair. May act as a 'molecular matchmaker', a protein that promotes the formation of a stable complex between two or more DNA-binding proteins in an ATP-dependent manner without itself being part of a final effector complex. The chain is DNA mismatch repair protein MutL from Caldanaerobacter subterraneus subsp. tengcongensis (strain DSM 15242 / JCM 11007 / NBRC 100824 / MB4) (Thermoanaerobacter tengcongensis).